The sequence spans 715 residues: Fatty acid oxidation complex subunit alpha (715 aa).

The segment at 1–190 is enoyl-CoA hydratase; sequence MTTTSAFMLN…KAGLVDDVVP (190 aa). Residues 306 to 715 form a 3-hydroxyacyl-CoA dehydrogenase region; it reads GPLNSVGILG…WTNGETDQGN (410 aa).

It in the N-terminal section; belongs to the enoyl-CoA hydratase/isomerase family. This sequence in the central section; belongs to the 3-hydroxyacyl-CoA dehydrogenase family. Heterotetramer of two alpha chains (FadJ) and two beta chains (FadI).

The protein resides in the cytoplasm. The catalysed reaction is a (3S)-3-hydroxyacyl-CoA = a (2E)-enoyl-CoA + H2O. It catalyses the reaction a 4-saturated-(3S)-3-hydroxyacyl-CoA = a (3E)-enoyl-CoA + H2O. The enzyme catalyses a (3S)-3-hydroxyacyl-CoA + NAD(+) = a 3-oxoacyl-CoA + NADH + H(+). It carries out the reaction (3S)-3-hydroxybutanoyl-CoA = (3R)-3-hydroxybutanoyl-CoA. It participates in lipid metabolism; fatty acid beta-oxidation. Catalyzes the formation of a hydroxyacyl-CoA by addition of water on enoyl-CoA. Also exhibits 3-hydroxyacyl-CoA epimerase and 3-hydroxyacyl-CoA dehydrogenase activities. The polypeptide is Fatty acid oxidation complex subunit alpha (Salmonella gallinarum (strain 287/91 / NCTC 13346)).